A 104-amino-acid polypeptide reads, in one-letter code: Zinc-containing ferredoxin-1 (104 aa).

The N-terminal extension stretch occupies residues 2 to 37 (GIDPNYRTNRQVVGEHSGHKVYGPVEPPKVLGIHGT). His-17 and His-20 together coordinate Zn(2+). N6-methyllysine is present on Lys-30. Zn(2+) is bound at residue His-35. 4Fe-4S ferredoxin-type domains lie at 38-66 (IVGV…WYDT) and 75-104 (KADP…VKPP). Positions 46 and 52 each coordinate [3Fe-4S] cluster. Cys-56 contributes to the [4Fe-4S] cluster binding site. Asp-77 serves as a coordination point for Zn(2+). Residues Cys-84, Cys-87, and Cys-90 each coordinate [4Fe-4S] cluster. Cys-94 contributes to the [3Fe-4S] cluster binding site.

Requires [3Fe-4S] cluster as cofactor. The cofactor is [4Fe-4S] cluster. It depends on Zn(2+) as a cofactor.

Functionally, ferredoxins are iron-sulfur proteins that transfer electrons in a wide variety of metabolic reactions. The protein is Zinc-containing ferredoxin-1 (zfx1) of Sulfurisphaera tokodaii (strain DSM 16993 / JCM 10545 / NBRC 100140 / 7) (Sulfolobus tokodaii).